The following is a 144-amino-acid chain: MPCVFCAIIAGEAPAIRIYEDGGYLAILDIRPFTRGHTLVLPKRHTVDLTDTPPEALADMVAIGQRIARAARATKLADATHIAINDGRAAFQTVFHVHLHVLPPRNGDKLSVAKGMMLRRDPDREATGRILREALAQQDAAAQD.

The region spanning 4-111 is the HIT domain; that stretch reads VFCAIIAGEA…LPPRNGDKLS (108 aa). The short motif at 96–100 is the Histidine triad motif element; sequence HVHLH.

This is an uncharacterized protein from Mycobacterium tuberculosis (strain CDC 1551 / Oshkosh).